Here is a 341-residue protein sequence, read N- to C-terminus: Elongation factor Ts (341 aa).

Residues 80–83 form an involved in Mg(2+) ion dislocation from EF-Tu region; that stretch reads TDFV.

It belongs to the EF-Ts family.

It localises to the cytoplasm. Functionally, associates with the EF-Tu.GDP complex and induces the exchange of GDP to GTP. It remains bound to the aminoacyl-tRNA.EF-Tu.GTP complex up to the GTP hydrolysis stage on the ribosome. This is Elongation factor Ts from Lactobacillus helveticus (strain DPC 4571).